We begin with the raw amino-acid sequence, 87 residues long: Small ribosomal subunit protein bS20 (87 aa).

The disordered stretch occupies residues 1 to 20; that stretch reads MANHKSAEKRARQTIKRTER.

This sequence belongs to the bacterial ribosomal protein bS20 family.

In terms of biological role, binds directly to 16S ribosomal RNA. The chain is Small ribosomal subunit protein bS20 from Campylobacter lari (strain RM2100 / D67 / ATCC BAA-1060).